Consider the following 402-residue polypeptide: MSSSPEAETMECGISSSKVHDSKTNTTYGIIHNSINGTDTTLFDTFPDSTDNAEVTGDVDDVKTESSPESQSEDLSPFGNDGNESPETVTDIDAVSAVRMQYNIVSSLSPGSEGYIYVCTKRGDNTKRKVIVKAVTGGKTLGSEIDILKKMSHRSIIRLVHAYRWKSTVCMVMPKYKCDLFTYIDIMGPLPLNQIITIERGLLGALAYIHEKGIIHRDVKTENIFLDKPENVVLGDFGAACKLDEHTDKPKCYGWSGTLETNSPELLALDPYCTKTDIWSAGLVLFEMSVKNITFFGKQVNGSGSQLRSIIRCLQVHPLEFPQNNSTNLCKHFKQYAIQLRHPYAIPQIIRKSGMTMDLEYAIAKMLTFDQEFRPSAQDILMLPLFTKEPADALYTITAAHM.

Disordered regions lie at residues 1 to 21 (MSSS…KVHD) and 46 to 88 (FPDS…SPET). Positions 102 to 386 (YNIVSSLSPG…AQDILMLPLF (285 aa)) constitute a Protein kinase domain. ATP contacts are provided by residues 108 to 116 (LSPGSEGYI) and lysine 129. The Proton acceptor role is filled by aspartate 218.

Belongs to the protein kinase superfamily. Ser/Thr protein kinase family. In terms of processing, phosphorylated by UL13 homolog; this phosphorylation regulates subsequent phosphorylation of UL31 and UL34 homologs by US3. Autophosphorylated.

The protein resides in the host cytoplasm. It localises to the host nucleus. The catalysed reaction is L-seryl-[protein] + ATP = O-phospho-L-seryl-[protein] + ADP + H(+). The enzyme catalyses L-threonyl-[protein] + ATP = O-phospho-L-threonyl-[protein] + ADP + H(+). Multifunctional serine/threonine kinase that plays a role in several processes including egress of virus particles from the nucleus, modulation of the actin cytoskeleton and inhibition of apoptosis. Phosphorylates UL31 and UL34 homologs, two critical regulators of capsid budding from nucleus to endoplasmic reticulum, thereby facilitating virion egress. Modulates and redistributes host components of the nuclear envelope, including LMNA, emerin/EMD and the nuclear matrix protein MATR3. Phosphorylates envelope glycoprotein B (gB), probably to direct it to the cell surface. Promotes virus intracellular spread by restructuring host cell cytoskeleton. Blocks host apoptosis to extend cell survival and allow efficient viral replication. Promotes viral gene expression by phosphorylating host HDAC2 to reduce viral genome silencing. The chain is Protein kinase US3 homolog (MDV092) from Gallus gallus (Chicken).